A 332-amino-acid polypeptide reads, in one-letter code: Ketol-acid reductoisomerase (NADP(+)) (332 aa).

The 182-residue stretch at 1 to 182 (MAQTWKDTDI…GSARAGLIKT (182 aa)) folds into the KARI N-terminal Rossmann domain. Residues 25-28 (YGIQ), lysine 48, serine 53, and 83-86 (DMIQ) contribute to the NADP(+) site. Histidine 108 is an active-site residue. Glycine 134 provides a ligand contact to NADP(+). In terms of domain architecture, KARI C-terminal knotted spans 183–329 (AFKEEVETDW…KEMRKMMWPD (147 aa)). Aspartate 191, glutamate 195, glutamate 227, and glutamate 231 together coordinate Mg(2+). Residue serine 252 coordinates substrate.

The protein belongs to the ketol-acid reductoisomerase family. Requires Mg(2+) as cofactor.

The catalysed reaction is (2R)-2,3-dihydroxy-3-methylbutanoate + NADP(+) = (2S)-2-acetolactate + NADPH + H(+). The enzyme catalyses (2R,3R)-2,3-dihydroxy-3-methylpentanoate + NADP(+) = (S)-2-ethyl-2-hydroxy-3-oxobutanoate + NADPH + H(+). The protein operates within amino-acid biosynthesis; L-isoleucine biosynthesis; L-isoleucine from 2-oxobutanoate: step 2/4. Its pathway is amino-acid biosynthesis; L-valine biosynthesis; L-valine from pyruvate: step 2/4. Involved in the biosynthesis of branched-chain amino acids (BCAA). Catalyzes an alkyl-migration followed by a ketol-acid reduction of (S)-2-acetolactate (S2AL) to yield (R)-2,3-dihydroxy-isovalerate. In the isomerase reaction, S2AL is rearranged via a Mg-dependent methyl migration to produce 3-hydroxy-3-methyl-2-ketobutyrate (HMKB). In the reductase reaction, this 2-ketoacid undergoes a metal-dependent reduction by NADPH to yield (R)-2,3-dihydroxy-isovalerate. This is Ketol-acid reductoisomerase (NADP(+)) from Nitrosopumilus maritimus (strain SCM1).